Consider the following 192-residue polypeptide: Adenylate kinase (192 aa).

Residue 10–15 coordinates ATP; that stretch reads GAGKGT. The NMP stretch occupies residues 30–56; the sequence is GTGGMLRALEPESGEQIHLRIDRGHFA. AMP is bound by residues Thr-31, Arg-36, 82–85, and Gln-89; that span reads GFPR. The LID stretch occupies residues 123–133; sequence KRGETENRADD. Arg-124 is an ATP binding site. 2 residues coordinate AMP: Arg-130 and Arg-141. Residue Asp-169 participates in ATP binding.

The protein belongs to the adenylate kinase family. Monomer.

It localises to the cytoplasm. It catalyses the reaction AMP + ATP = 2 ADP. It functions in the pathway purine metabolism; AMP biosynthesis via salvage pathway; AMP from ADP: step 1/1. Catalyzes the reversible transfer of the terminal phosphate group between ATP and AMP. Plays an important role in cellular energy homeostasis and in adenine nucleotide metabolism. This is Adenylate kinase from Rhodopirellula baltica (strain DSM 10527 / NCIMB 13988 / SH1).